We begin with the raw amino-acid sequence, 501 residues long: Putative matrix metalloproteinase (501 aa).

The N-terminal stretch at 1–26 (MMPQYERKQIIIHISCVIICVVVTLT) is a signal peptide. Residues Asn48, Asn58, Asn61, Asn94, Asn116, and Asn163 are each glycosylated (N-linked (GlcNAc...) asparagine; by host). His179 lines the Zn(2+) pocket. Glu180 is a catalytic residue. The Zn(2+) site is built by His183 and His189. N-linked (GlcNAc...) asparagine; by host glycosylation is found at Asn192, Asn267, Asn280, and Asn291. The Hemopexin repeat unit spans residues 311–356 (TGHIDTISVIRGELYIFVDEYHWRFRSNGLLYSGYPLKTTHSWSVP). N-linked (GlcNAc...) asparagine; by host glycans are attached at residues Asn379 and Asn493.

The protein belongs to the peptidase M10A family. Zn(2+) serves as cofactor.

This Trichoplusia ni ascovirus 2c (TnAV-2c) protein is Putative matrix metalloproteinase.